The sequence spans 121 residues: Large ribosomal subunit protein uL24 (121 aa).

Belongs to the universal ribosomal protein uL24 family. In terms of assembly, part of the 50S ribosomal subunit.

Its function is as follows. One of two assembly initiator proteins, it binds directly to the 5'-end of the 23S rRNA, where it nucleates assembly of the 50S subunit. In terms of biological role, located at the polypeptide exit tunnel on the outside of the subunit. The chain is Large ribosomal subunit protein uL24 from Pyrococcus abyssi (strain GE5 / Orsay).